Consider the following 194-residue polypeptide: Threonylcarbamoyl-AMP synthase (194 aa).

The 183-residue stretch at 12–194 (SPNMKDLLIQ…DVMTGKLIRE (183 aa)) folds into the YrdC-like domain.

It belongs to the SUA5 family. TsaC subfamily.

It localises to the cytoplasm. The enzyme catalyses L-threonine + hydrogencarbonate + ATP = L-threonylcarbamoyladenylate + diphosphate + H2O. Functionally, required for the formation of a threonylcarbamoyl group on adenosine at position 37 (t(6)A37) in tRNAs that read codons beginning with adenine. Catalyzes the conversion of L-threonine, HCO(3)(-)/CO(2) and ATP to give threonylcarbamoyl-AMP (TC-AMP) as the acyladenylate intermediate, with the release of diphosphate. The chain is Threonylcarbamoyl-AMP synthase from Blochmanniella pennsylvanica (strain BPEN).